We begin with the raw amino-acid sequence, 138 residues long: Basic phospholipase A2 Cll-N6 (138 aa).

A signal peptide spans 1–16 (MRTFWIVAVLLVGVEG). 7 disulfide bridges follow: cysteine 42–cysteine 131, cysteine 44–cysteine 60, cysteine 59–cysteine 111, cysteine 65–cysteine 138, cysteine 66–cysteine 104, cysteine 73–cysteine 97, and cysteine 91–cysteine 102. Residues tyrosine 43, glycine 45, and glycine 47 each coordinate Ca(2+). Residue histidine 63 is part of the active site. Aspartate 64 is a binding site for Ca(2+). Aspartate 105 is an active-site residue.

As to quaternary structure, monomer. It depends on Ca(2+) as a cofactor. As to expression, expressed by the venom gland.

The protein resides in the secreted. The enzyme catalyses a 1,2-diacyl-sn-glycero-3-phosphocholine + H2O = a 1-acyl-sn-glycero-3-phosphocholine + a fatty acid + H(+). Its function is as follows. Snake venom phospholipase A2 (PLA2) that shows myotoxic activities. PLA2 catalyzes the calcium-dependent hydrolysis of the 2-acyl groups in 3-sn-phosphoglycerides. In Crotalus lepidus lepidus (Mottled rock rattlesnake), this protein is Basic phospholipase A2 Cll-N6.